A 280-amino-acid polypeptide reads, in one-letter code: Diaminopimelate epimerase (280 aa).

2 residues coordinate substrate: N11 and N62. The active-site Proton donor is the C71. Residues 72 to 73, N160, N193, and 211 to 212 contribute to the substrate site; these read GN and ER. C220 functions as the Proton acceptor in the catalytic mechanism. Substrate is bound at residue 221 to 222; the sequence is GT.

The protein belongs to the diaminopimelate epimerase family. Homodimer.

Its subcellular location is the cytoplasm. The catalysed reaction is (2S,6S)-2,6-diaminopimelate = meso-2,6-diaminopimelate. Its pathway is amino-acid biosynthesis; L-lysine biosynthesis via DAP pathway; DL-2,6-diaminopimelate from LL-2,6-diaminopimelate: step 1/1. In terms of biological role, catalyzes the stereoinversion of LL-2,6-diaminopimelate (L,L-DAP) to meso-diaminopimelate (meso-DAP), a precursor of L-lysine and an essential component of the bacterial peptidoglycan. The chain is Diaminopimelate epimerase from Acetivibrio thermocellus (strain ATCC 27405 / DSM 1237 / JCM 9322 / NBRC 103400 / NCIMB 10682 / NRRL B-4536 / VPI 7372) (Clostridium thermocellum).